A 182-amino-acid polypeptide reads, in one-letter code: Large ribosomal subunit protein bL25 (182 aa).

The protein belongs to the bacterial ribosomal protein bL25 family. CTC subfamily. In terms of assembly, part of the 50S ribosomal subunit; part of the 5S rRNA/L5/L18/L25 subcomplex. Contacts the 5S rRNA. Binds to the 5S rRNA independently of L5 and L18.

In terms of biological role, this is one of the proteins that binds to the 5S RNA in the ribosome where it forms part of the central protuberance. In Borreliella burgdorferi (strain ZS7) (Borrelia burgdorferi), this protein is Large ribosomal subunit protein bL25.